We begin with the raw amino-acid sequence, 349 residues long: Nicotinate-nucleotide--dimethylbenzimidazole phosphoribosyltransferase (349 aa).

The Proton acceptor role is filled by glutamate 315.

The protein belongs to the CobT family.

It carries out the reaction 5,6-dimethylbenzimidazole + nicotinate beta-D-ribonucleotide = alpha-ribazole 5'-phosphate + nicotinate + H(+). It functions in the pathway nucleoside biosynthesis; alpha-ribazole biosynthesis; alpha-ribazole from 5,6-dimethylbenzimidazole: step 1/2. Catalyzes the synthesis of alpha-ribazole-5'-phosphate from nicotinate mononucleotide (NAMN) and 5,6-dimethylbenzimidazole (DMB). The polypeptide is Nicotinate-nucleotide--dimethylbenzimidazole phosphoribosyltransferase (Variovorax paradoxus (strain S110)).